The following is a 576-amino-acid chain: uncharacterized protein (576 aa).

This sequence belongs to the FadG family.

This is an uncharacterized protein from Bacillus subtilis (strain 168).